Reading from the N-terminus, the 200-residue chain is MFPEQQKEEFVSVWVRDPRIQKEDFWHSYIDYEICIHTNSMCFTMKTSCVRRRYREFVWLRQRLQSNALLVQLPELPSKNLFFNMNNRQHVDQRRQGLEDFLRKVLQNALLLSDSSLHLFLQSHLNSEDIEACVSGQTKYSVEEAIHKFALMNRRFPEEEEGKKENDIDYDSESSSSGFGHSSDDSSSHGCKMSTAPQES.

The required for interaction with ATP6V1D stretch occupies residues 8–125 (EEFVSVWVRD…SLHLFLQSHL (118 aa)). Residues 10–127 (FVSVWVRDPR…HLFLQSHLNS (118 aa)) enclose the PX domain. A 1,2-diacyl-sn-glycero-3-phospho-(1D-myo-inositol-3-phosphate) contacts are provided by Arg53, Lys79, and Arg94. Positions 156–167 (FPEEEEGKKEND) are enriched in basic and acidic residues. The tract at residues 156–200 (FPEEEEGKKENDIDYDSESSSSGFGHSSDDSSSHGCKMSTAPQES) is disordered.

Belongs to the sorting nexin family. Interacts with ATP6V1D; may play a role in ciliogenesis.

The protein resides in the cytoplasm. It localises to the endosome membrane. It is found in the cytoskeleton. The protein localises to the microtubule organizing center. Its subcellular location is the centrosome. Its function is as follows. Probable phosphoinositide-binding protein involved in protein sorting and membrane trafficking in endosomes. Plays a role in cilium biogenesis through regulation of the transport and the localization of proteins to the cilium. Required for the localization to the cilium of V-ATPase subunit ATP6V1D and ATP6V0D1, and RAB8A. Involved in osteoclast differentiation and therefore bone resorption. The sequence is that of Sorting nexin-10 (SNX10) from Bos taurus (Bovine).